We begin with the raw amino-acid sequence, 427 residues long: Peptidase B (427 aa).

Mn(2+)-binding residues include K195 and D200. K207 is a catalytic residue. Mn(2+)-binding residues include D218, D277, and E279. R281 is an active-site residue.

Belongs to the peptidase M17 family. Homohexamer. Mn(2+) is required as a cofactor.

It is found in the cytoplasm. It catalyses the reaction Release of an N-terminal amino acid, Xaa, from a peptide or arylamide. Xaa is preferably Glu or Asp but may be other amino acids, including Leu, Met, His, Cys and Gln.. Functionally, probably plays an important role in intracellular peptide degradation. The sequence is that of Peptidase B from Salmonella typhi.